Consider the following 286-residue polypeptide: Protein NipSnap homolog 2 (286 aa).

Residues 1–40 constitute a mitochondrion transit peptide; sequence MATRVLHSSCSGLYRAAGPARGKGHATAVIRSLSASHNRP.

Belongs to the NipSnap family.

The protein localises to the mitochondrion matrix. Protein involved in mitophagy. Accumulates on the mitochondria surface in response to mitochondrial depolarization and acts as a 'eat me' signal by recruiting proteins involved in selective autophagy. The polypeptide is Protein NipSnap homolog 2 (nipsnap2) (Danio rerio (Zebrafish)).